The primary structure comprises 453 residues: Divalent metal cation transporter MntH (453 aa).

The next 11 membrane-spanning stretches (helical) occupy residues 39–59 (LAFLGPGLLVAVGYMDPGNWI), 66–86 (AQYGYTLLFIILISSLSAMLL), 114–134 (AIMFWIIAELAIIATDIAEVI), 146–166 (IPLIVGALITVFDVFLLLFIM), 175–195 (AIVGTLIFTVLAIFVFEVYIS), 217–237 (GILYIALGIIGATIMPHNLYL), 270–290 (LSIAFVVNCLLLTLGAALFFG), 310–330 (PALGATLGGIMSTLFAVALLA), 362–382 (LITRSLAVIPVIICLIVFKGN), 388–408 (QLLVFSQVFLSIALPFSLIPL), and 427–447 (INIISWLLIIVLSGLNVYLII).

It belongs to the NRAMP family.

It localises to the cell membrane. Its function is as follows. H(+)-stimulated, divalent metal cation uptake system. The polypeptide is Divalent metal cation transporter MntH (Staphylococcus epidermidis (strain ATCC 12228 / FDA PCI 1200)).